Consider the following 222-residue polypeptide: Sperm acrosome-associated protein 9 (222 aa).

A disordered region spans residues 164–222 (QHVSEPQAHQESTRGAARPAQAIGTQPRATKHKCRQLTKASLKPRGCSKPPWRPPGGKL).

As to quaternary structure, microtubule inner protein component of sperm flagellar doublet microtubules. Interacts with CABP1 and CALR. Interacts with INCA1. Interacts with microtubules.

Its subcellular location is the cytoplasm. The protein localises to the cytoplasmic vesicle. The protein resides in the secretory vesicle. It is found in the acrosome. It localises to the cytoskeleton. Its subcellular location is the cilium basal body. The protein localises to the flagellum axoneme. The protein resides in the cilium axoneme. It is found in the nucleus. In terms of biological role, microtubule inner protein (MIP) part of the dynein-decorated doublet microtubules (DMTs) of multiciliated respiratory cells and the distal singlet microtubules of monoflagellated spermatozoa. Forms an extensive interaction network cross-linking the lumen of axonemal doublet microtubules. This chain is Sperm acrosome-associated protein 9, found in Homo sapiens (Human).